We begin with the raw amino-acid sequence, 997 residues long: Frequency clock protein (997 aa).

7 disordered regions span residues Met1 to Ser153, Phe214 to His311, Gly381 to Pro447, Ser524 to Pro590, Asp665 to Ala694, Glu889 to Asn908, and Ser975 to Ser997. Polar residues predominate over residues Gly74 to Asn94. Residues Lys115–Arg125 show a composition bias toward basic and acidic residues. Residues Asp138 to Ser152 are compositionally biased toward polar residues. Positions Gln227–Ala237 are enriched in basic residues. The span at His239–Ser261 shows a compositional bias: low complexity. The span at Ala264–Ala275 shows a compositional bias: polar residues. Low complexity predominate over residues Ser277–Ser294. Positions Lys391–Asp402 are enriched in polar residues. The segment covering Val410 to Gly421 has biased composition (gly residues). Residues Arg438–Pro447 show a composition bias toward basic and acidic residues. A Nuclear localization signal motif is present at residues Arg569–Lys573. The span at Pro675–Ser688 shows a compositional bias: polar residues. Positions Gly986–Ser997 are enriched in polar residues.

This sequence belongs to the FRQ family.

The protein resides in the nucleus. In terms of biological role, circadian clock component involved in the generation of biological rhythms, in particular in rhythm stability, period length, and temperature compensation. Behaves as a negative element in circadian transcriptional loop. This is Frequency clock protein (FRQ) from Sordaria fimicola.